A 54-amino-acid polypeptide reads, in one-letter code: Protein PIGBOS1 (54 aa).

Topologically, residues 1-4 are mitochondrial intermembrane; the sequence is MFRR. The chain crosses the membrane as a helical span at residues 5–25; sequence LTFAQLLFATVLGIAGGVYIF. Topologically, residues 26 to 54 are cytoplasmic; the sequence is QPVFEQYAKDQKELKEKMQLVQESEEKKS. The interval 30 to 36 is required for interaction with CLCC1; it reads EQYAKDQ.

As to quaternary structure, homooligomer. Interacts (via C-terminus) with endoplasmic reticulum (ER) protein CLCC1; the interaction occurs at the mitochondria-associated ER membrane, a zone of contact between the ER and mitochondrial membranes, but does not appear to play a role in ER-mitochondria tethering and is not affected by ER stress.

It is found in the mitochondrion outer membrane. Functionally, plays a role in regulation of the unfolded protein response triggered by endoplasmic reticulum (ER) stress resulting from the presence of unfolded proteins in the ER lumen. The protein is Protein PIGBOS1 of Homo sapiens (Human).